We begin with the raw amino-acid sequence, 598 residues long: Potassium voltage-gated channel subfamily A member 5 (598 aa).

The interval 1–89 (MEIALGPLEN…EEGEGDPGLS (89 aa)) is disordered. The tetramerization domain stretch occupies residues 1 to 195 (MEIALGPLEN…FYQLGDEAME (195 aa)). The Cytoplasmic segment spans residues 1 to 231 (MEIALGPLEN…LIFEYPESSG (231 aa)). Positions 60–69 (RPLPPQPPEL) are enriched in pro residues. Residue K205 forms a Glycyl lysine isopeptide (Lys-Gly) (interchain with G-Cter in SUMO) linkage. A helical membrane pass occupies residues 232 to 253 (SARAIAIVSVLVILISIITFCL). Residues 254 to 308 (ETLPEFKDERELLRHPPVPHQPPAAPALGANGSGAVAPASGSTVAPLLPRTLADP) lie on the Extracellular side of the membrane. A helical membrane pass occupies residues 309–330 (FFIVETTCVIWFTFELLVRFFA). C331 is lipidated: S-palmitoyl cysteine. The Cytoplasmic portion of the chain corresponds to 331 to 341 (CPSKAEFSRNI). Residues 342–362 (MNIIDIVAIFPYFITLGTELA) traverse the membrane as a helical segment. Over 363–380 (EQQPGGGGGGQNGQQAMS) the chain is Extracellular. The chain crosses the membrane as a helical; Voltage-sensor span at residues 381–401 (LAILRVIRLVRVFRIFKLSRH). Over 402-416 (SKGLQILGKTLQASM) the chain is Cytoplasmic. The S4-S5 linker stretch occupies residues 403–416 (KGLQILGKTLQASM). Residues 417-438 (RELGLLIFFLFIGVILFSSAVY) form a helical membrane-spanning segment. The Extracellular segment spans residues 439-452 (FAEADNQGTHFSSI). The segment at residues 453–464 (PDAFWWAVVTMT) is an intramembrane region (helical). Positions 465 to 470 (TVGYGD) match the Selectivity filter motif. The stretch at 465–472 (TVGYGDMR) is an intramembrane region. Residues 480–508 (IVGSLCAIAGVLTIALPVPVIVSNFNYFY) form a helical membrane-spanning segment. The Cytoplasmic segment spans residues 509–598 (HRETDHEEQA…CLDTSRETDL (90 aa)). Residues 517-539 (QAALKEEPGSQSRGTSLDAGGQR) are disordered. Residue K521 forms a Glycyl lysine isopeptide (Lys-Gly) (interchain with G-Cter in SUMO) linkage. The PDZ-binding signature appears at 596–598 (TDL).

The protein belongs to the potassium channel family. A (Shaker) (TC 1.A.1.2) subfamily. Kv1.5/KCNA5 sub-subfamily. In terms of assembly, homotetramer and heterotetramer of potassium channel proteins. Interacts with DLG1, which enhances channel currents. Forms a ternary complex with DLG1 and CAV3. Interacts with KCNAB1. Interacts with UBE2I. Interacts with XIRP2; the interaction is required for normal action potential configuration in the heart. Glycosylated. Post-translationally, sumoylated on Lys-205, and Lys-521, preferentially with SUMO3. Sumoylation regulates the voltage sensitivity of the channel.

The protein resides in the cell membrane. The catalysed reaction is K(+)(in) = K(+)(out). In terms of biological role, voltage-gated potassium channel that mediates transmembrane potassium transport in excitable membranes. Forms tetrameric potassium-selective channels through which potassium ions pass in accordance with their electrochemical gradient. The channel alternates between opened and closed conformations in response to the voltage difference across the membrane. Can form functional homotetrameric channels and heterotetrameric channels that contain variable proportions of KCNA1, KCNA2, KCNA4, KCNA5, and possibly other family members as well; channel properties depend on the type of alpha subunits that are part of the channel. Channel properties are modulated by cytoplasmic beta subunits that regulate the subcellular location of the alpha subunits and promote rapid inactivation. Homotetrameric channels display rapid activation and slow inactivation. Required for normal electrical conduction including formation of the infranodal ventricular conduction system and normal action potential configuration, as a result of its interaction with XIRP2. May play a role in regulating the secretion of insulin in normal pancreatic islets. This is Potassium voltage-gated channel subfamily A member 5 (KCNA5) from Oryctolagus cuniculus (Rabbit).